Consider the following 261-residue polypeptide: Cobalt transport protein CbiM (261 aa).

The N-terminal stretch at 1 to 33 (MLRRVLASKRASLILMGMLSFYIIVSASAPAYA) is a signal peptide. A run of 7 helical transmembrane segments spans residues 41 to 61 (LPAG…LLGV), 76 to 96 (LLLA…LPSV), 108 to 128 (LGSV…VLLF), 140 to 160 (TLGA…YWIY), 172 to 192 (IAIF…TSVQ), 197 to 217 (FPAP…IFAI), and 220 to 240 (IPLA…LQSY).

Belongs to the CbiM family. Forms an energy-coupling factor (ECF) transporter complex composed of an ATP-binding protein (A component, CbiO), a transmembrane protein (T component, CbiQ) and 2 possible substrate-capture proteins (S components, CbiM and CbiN) of unknown stoichimetry.

The protein localises to the cell inner membrane. Its pathway is cofactor biosynthesis; adenosylcobalamin biosynthesis. Functionally, part of the energy-coupling factor (ECF) transporter complex CbiMNOQ involved in cobalt import. The chain is Cobalt transport protein CbiM from Nostoc sp. (strain PCC 7120 / SAG 25.82 / UTEX 2576).